The primary structure comprises 299 residues: tRNA dimethylallyltransferase (299 aa).

13 to 20 serves as a coordination point for ATP; it reads GPTASGKT. 15-20 serves as a coordination point for substrate; the sequence is TASGKT. The interaction with substrate tRNA stretch occupies residues 38-41; it reads DSRQ.

The protein belongs to the IPP transferase family. As to quaternary structure, monomer. Mg(2+) is required as a cofactor.

It catalyses the reaction adenosine(37) in tRNA + dimethylallyl diphosphate = N(6)-dimethylallyladenosine(37) in tRNA + diphosphate. In terms of biological role, catalyzes the transfer of a dimethylallyl group onto the adenine at position 37 in tRNAs that read codons beginning with uridine, leading to the formation of N6-(dimethylallyl)adenosine (i(6)A). The sequence is that of tRNA dimethylallyltransferase from Prochlorococcus marinus (strain SARG / CCMP1375 / SS120).